A 563-amino-acid polypeptide reads, in one-letter code: DNA repair protein rhp7 (563 aa).

Positions 1–101 (MSSGSRVRGP…TDEEAEDNED (101 aa)) are disordered. Residues 39 to 59 (ESAGQSTGTESEVIQTPTSVE) show a composition bias toward polar residues. Residues 78 to 90 (VKRRNLRNQKKKK) are compositionally biased toward basic residues.

This sequence belongs to the RAD7 family.

The protein localises to the nucleus. Functionally, involved in global genome repair (GGR) via nucleotide excision repair (NER), in conjunction with rhp16, after UV irradiation. This chain is DNA repair protein rhp7 (rhp7), found in Schizosaccharomyces pombe (strain 972 / ATCC 24843) (Fission yeast).